Consider the following 63-residue polypeptide: Small ribosomal subunit protein eS27 (63 aa).

The Zn(2+) site is built by cysteine 18, cysteine 21, cysteine 37, and cysteine 40. The segment at cysteine 18–cysteine 40 adopts a C4-type zinc-finger fold.

This sequence belongs to the eukaryotic ribosomal protein eS27 family. Part of the 30S ribosomal subunit. Zn(2+) serves as cofactor.

The chain is Small ribosomal subunit protein eS27 from Methanothermobacter thermautotrophicus (strain ATCC 29096 / DSM 1053 / JCM 10044 / NBRC 100330 / Delta H) (Methanobacterium thermoautotrophicum).